The sequence spans 432 residues: Bouquet formation protein 4 (432 aa).

The interval 1–21 is disordered; sequence MTENEKSRSLPAERNPLYKDD. Residues 38-147 enclose the HTH APSES-type domain; it reads EFPDGPATFV…SSTPSTYATP (110 aa). Positions 73 to 94 form a DNA-binding region, H-T-H motif; it reads ATSMFRSAFPKATQEEEDLEMR. Composition is skewed to low complexity over residues 139 to 152 and 163 to 172; these read STPSTYATPSRPTA and ESSTSATTTS. 2 disordered regions span residues 139–283 and 364–384; these read STPS…GKIR and KSSIRSSPKSKKRSREDFEEN. Positions 180-228 are enriched in basic and acidic residues; that stretch reads RLAEHLENSKKTILQHDNKEEDKEIHSEENETKDEIKSEKKEPEIKKQE. Residues 229–241 are compositionally biased toward polar residues; sequence GGSSTEKVGQPSS.

In terms of assembly, interacts with rap1.

It localises to the cytoplasm. The protein resides in the nucleus. Its subcellular location is the nucleus inner membrane. Connects telomeres to the nuclear envelop (NE) during both vegetative growth and meiosis. This connection ensures clustering of telomeres to the spindle pole body (SPB) when cells enter meiotic prophase. The polypeptide is Bouquet formation protein 4 (bqt4) (Schizosaccharomyces pombe (strain 972 / ATCC 24843) (Fission yeast)).